We begin with the raw amino-acid sequence, 569 residues long: Undecaprenyl phosphate-alpha-4-amino-4-deoxy-L-arabinose arabinosyl transferase 1 (569 aa).

Transmembrane regions (helical) follow at residues 27–47, 98–120, 129–149, 151–171, 194–214, 225–245, 275–295, 311–331, 334–354, 366–386, 396–416, and 420–440; these read GLIL…GLWI, LFGV…YLLA, INAA…QAGY, NLDP…WFAI, LMTK…PYML, YGLV…LAVH, PWWF…LLLP, AYLA…SGKL, YIMP…VKWL, GVFN…LQAT, FSLS…ALQV, and LTLW…LPAA.

This sequence belongs to the glycosyltransferase 83 family.

It localises to the cell inner membrane. It catalyses the reaction 4-amino-4-deoxy-alpha-L-arabinopyranosyl di-trans,octa-cis-undecaprenyl phosphate + lipid IVA = lipid IIA + di-trans,octa-cis-undecaprenyl phosphate.. The protein operates within lipopolysaccharide metabolism; 4-amino-4-deoxy-beta-L-arabinose-lipid A biosynthesis. In terms of biological role, catalyzes the transfer of the L-Ara4N moiety of the glycolipid undecaprenyl phosphate-alpha-L-Ara4N to lipid A. The modified arabinose is attached to lipid A and is required for resistance to polymyxin and cationic antimicrobial peptides. This Pseudomonas fluorescens (strain Pf0-1) protein is Undecaprenyl phosphate-alpha-4-amino-4-deoxy-L-arabinose arabinosyl transferase 1.